Consider the following 311-residue polypeptide: Formimidoylglutamase (311 aa).

Histidine 130, aspartate 155, histidine 157, aspartate 159, cysteine 242, and aspartate 244 together coordinate Mn(2+).

It belongs to the arginase family. Requires Mn(2+) as cofactor.

It carries out the reaction N-formimidoyl-L-glutamate + H2O = formamide + L-glutamate. It functions in the pathway amino-acid degradation; L-histidine degradation into L-glutamate; L-glutamate from N-formimidoyl-L-glutamate (hydrolase route): step 1/1. Its function is as follows. Catalyzes the conversion of N-formimidoyl-L-glutamate to L-glutamate and formamide. The sequence is that of Formimidoylglutamase from Staphylococcus aureus (strain Mu3 / ATCC 700698).